The primary structure comprises 468 residues: ATP synthase subunit beta (468 aa).

155-162 (GGAGVGKT) contacts ATP.

It belongs to the ATPase alpha/beta chains family. As to quaternary structure, F-type ATPases have 2 components, CF(1) - the catalytic core - and CF(0) - the membrane proton channel. CF(1) has five subunits: alpha(3), beta(3), gamma(1), delta(1), epsilon(1). CF(0) has three main subunits: a(1), b(2) and c(9-12). The alpha and beta chains form an alternating ring which encloses part of the gamma chain. CF(1) is attached to CF(0) by a central stalk formed by the gamma and epsilon chains, while a peripheral stalk is formed by the delta and b chains.

Its subcellular location is the cell membrane. The catalysed reaction is ATP + H2O + 4 H(+)(in) = ADP + phosphate + 5 H(+)(out). Functionally, produces ATP from ADP in the presence of a proton gradient across the membrane. The catalytic sites are hosted primarily by the beta subunits. In Streptococcus pyogenes serotype M1, this protein is ATP synthase subunit beta.